Here is a 218-residue protein sequence, read N- to C-terminus: MIP18 family protein galla-1 (218 aa).

Residues 1–59 (MLSYIKRKLSESDSGVSSVATVTSSCGGDSGRAGGTGSSESGTGSSSASISGRSQNADE) are disordered. The span at 12 to 27 (SDSGVSSVATVTSSCG) shows a compositional bias: low complexity. Residue Ser-14 is modified to Phosphoserine. Residues 28–37 (GDSGRAGGTG) show a composition bias toward gly residues. The segment covering 38–54 (SSESGTGSSSASISGRS) has biased composition (low complexity). Residue Ser-65 is modified to Phosphoserine.

Belongs to the MIP18 family. As to quaternary structure, component of the CGX complex composed of crb, galla (galla-1 or galla-2) and Xpd. Interacts with crb (via intracellular domain). Is not able to interact with Xpd in the absence of crb.

The protein localises to the apical cell membrane. It is found in the cytoplasm. Its subcellular location is the cytoskeleton. The protein resides in the spindle. Its function is as follows. Component of the crb-galla-Xpd (CGX) complex which is essential for proper mitotic chromosome segregation in early embryos. The CGX complex is also required for cell proliferation in developing wing disks. In the CGX complex, acts with crb to recruit Xpd thus forming the functional complex. In Drosophila melanogaster (Fruit fly), this protein is MIP18 family protein galla-1.